The following is a 102-amino-acid chain: Large ribosomal subunit protein bL21 (102 aa).

It belongs to the bacterial ribosomal protein bL21 family. As to quaternary structure, part of the 50S ribosomal subunit. Contacts protein L20.

In terms of biological role, this protein binds to 23S rRNA in the presence of protein L20. In Lawsonia intracellularis, this protein is Large ribosomal subunit protein bL21.